A 649-amino-acid chain; its full sequence is DNA mismatch repair protein MutL (649 aa).

Belongs to the DNA mismatch repair MutL/HexB family.

In terms of biological role, this protein is involved in the repair of mismatches in DNA. It is required for dam-dependent methyl-directed DNA mismatch repair. May act as a 'molecular matchmaker', a protein that promotes the formation of a stable complex between two or more DNA-binding proteins in an ATP-dependent manner without itself being part of a final effector complex. The protein is DNA mismatch repair protein MutL of Streptococcus pneumoniae (strain JJA).